The following is a 485-amino-acid chain: Aspartyl/glutamyl-tRNA(Asn/Gln) amidotransferase subunit B (485 aa).

It belongs to the GatB/GatE family. GatB subfamily. As to quaternary structure, heterotrimer of A, B and C subunits.

The enzyme catalyses L-glutamyl-tRNA(Gln) + L-glutamine + ATP + H2O = L-glutaminyl-tRNA(Gln) + L-glutamate + ADP + phosphate + H(+). The catalysed reaction is L-aspartyl-tRNA(Asn) + L-glutamine + ATP + H2O = L-asparaginyl-tRNA(Asn) + L-glutamate + ADP + phosphate + 2 H(+). Its function is as follows. Allows the formation of correctly charged Asn-tRNA(Asn) or Gln-tRNA(Gln) through the transamidation of misacylated Asp-tRNA(Asn) or Glu-tRNA(Gln) in organisms which lack either or both of asparaginyl-tRNA or glutaminyl-tRNA synthetases. The reaction takes place in the presence of glutamine and ATP through an activated phospho-Asp-tRNA(Asn) or phospho-Glu-tRNA(Gln). This chain is Aspartyl/glutamyl-tRNA(Asn/Gln) amidotransferase subunit B, found in Bordetella avium (strain 197N).